The primary structure comprises 670 residues: MTPTPDAPAAADAATGAGWLARRRGALARVALAPIAQAIGRVERVADGIAFVSGLEDTMLNEVLRFEGGVTGFAHTLDEDLISVVLLDPDAGVRAQTAVARTGAVLEVPAGPQLLGRVVDPLGRPLDGGAPLDAAHTLPIERAAPAIIERDLVSEPLDTGVLIVDALFTIGRGQRELIIGDRATGKTSLAIDAIVNQRHSDVICVYVAIGQRASAVRRVIDAVRRYGAPERCVFVVAPAACAPGLQWIAPFAGFSIAEYFRDRGQHALVVVDDLTKHAATHRELALLTREPPGREAYPGDIFYVHARLLERAAKLSAALGGGSLSALPIAETDAGNLAAYIPTNLISITDGQIVLDSALFAANQRPAVDVGLSVSRVGGKAQHPALRAASGRLRLDYAQFLELEAFTRFGGLTDARLRAQITRGERIRALITQPRFRALRTLDEVVLLKALAAGTLDAMSPDLVAPLRERLPAWLDARIAALTPALAPPRDWLADDAALDALAESVGELIERIAADAARRATAGMPAEDAAGDIGGAFGGEQARGDADRDADHGANREVSREVSPEASREVSREVSREVSHEADRDAAADAARVAGRAPGRAEPDRAVPRAMPDGPPRAQADGDRASASRPPPDARGDAARTAPSPQGGADANVNADANVDAEAEARHKR.

180 to 187 serves as a coordination point for ATP; sequence GDRATGKT. The disordered stretch occupies residues 525-670; it reads MPAEDAAGDI…DAEAEARHKR (146 aa). A compositionally biased stretch (basic and acidic residues) spans 543–588; it reads ARGDADRDADHGANREVSREVSPEASREVSREVSREVSHEADRDAA. Residues 589-599 show a composition bias toward low complexity; that stretch reads ADAARVAGRAP. Positions 621–639 are enriched in basic and acidic residues; that stretch reads ADGDRASASRPPPDARGDA. The span at 650–661 shows a compositional bias: low complexity; sequence ADANVNADANVD.

It belongs to the ATPase alpha/beta chains family. In terms of assembly, F-type ATPases have 2 components, CF(1) - the catalytic core - and CF(0) - the membrane proton channel. CF(1) has five subunits: alpha(3), beta(3), gamma(1), delta(1), epsilon(1). CF(0) has three main subunits: a(1), b(2) and c(9-12). The alpha and beta chains form an alternating ring which encloses part of the gamma chain. CF(1) is attached to CF(0) by a central stalk formed by the gamma and epsilon chains, while a peripheral stalk is formed by the delta and b chains.

It is found in the cell inner membrane. The enzyme catalyses ATP + H2O + 4 H(+)(in) = ADP + phosphate + 5 H(+)(out). Its function is as follows. Produces ATP from ADP in the presence of a proton gradient across the membrane. The alpha chain is a regulatory subunit. This Burkholderia mallei (strain NCTC 10247) protein is ATP synthase subunit alpha 2.